Here is a 146-residue protein sequence, read N- to C-terminus: Hemoglobin subunit beta (146 aa).

Val-1 carries the post-translational modification N-acetylvaline. The Globin domain maps to 2–146 (HLTDGEKNAL…VANALAHKYH (145 aa)). Ser-44 is subject to Phosphoserine. Lys-59 is modified (N6-acetyllysine). His-63 provides a ligand contact to heme b. Lys-82 carries the N6-acetyllysine modification. His-92 contacts heme b. Position 93 is an S-nitrosocysteine (Cys-93). N6-acetyllysine is present on Lys-144.

The protein belongs to the globin family. In terms of assembly, heterotetramer of two alpha chains and two beta chains. As to expression, red blood cells.

Involved in oxygen transport from the lung to the various peripheral tissues. The sequence is that of Hemoglobin subunit beta from Otospermophilus beecheyi (California ground squirrel).